A 477-amino-acid chain; its full sequence is ETS translocation variant 1 (477 aa).

Position 94 is a phosphoserine (S94). The tract at residues 128 to 179 (PQVGMRPSNPPTPSSTPVSPLHHASPNTAHTPKPDRAFPAHLPPSQSIPDST) is disordered. Phosphoserine; by RPS6KA1 and RPS6KA5 occurs at positions 191 and 216. Residue K317 forms a Glycyl lysine isopeptide (Lys-Gly) (interchain with G-Cter in SUMO2) linkage. Positions 335–415 (LQLWQFLVAL…AGERYVYKFV (81 aa)) form a DNA-binding region, ETS.

This sequence belongs to the ETS family. Sumoylated. Post-translationally, phosphorylated at Ser-191 and Ser-216 by RPS6KA1 and RPS6KA5; phosphorylation activates transcriptional activity. In terms of tissue distribution, abundant in kidney. Moderate levels seen in the heart, brain, lung, embryo and lower levels seen in spleen, intestine, testis and thymus.

The protein localises to the nucleus. Its function is as follows. Transcriptional activator that binds to DNA sequences containing the consensus pentanucleotide 5'-CGGA[AT]-3'. Required for olfactory dopaminergic neuron differentiation; may directly activate expression of tyrosine hydroxylase (TH). This is ETS translocation variant 1 from Mus musculus (Mouse).